Reading from the N-terminus, the 315-residue chain is BTB/POZ domain-containing adapter for CUL3-mediated RhoA degradation protein 3 (315 aa).

M1 carries the N-acetylmethionine modification. At S23 the chain carries Phosphoserine. A BTB domain is found at 32–100 (KYVKLNVGGA…LRDGGVPLPE (69 aa)). The PCNA-binding signature appears at 239-245 (QTKVEFP). Residues 269 to 294 (NALLEATGGAAGRSHHLDEDEERERE) form a disordered region.

This sequence belongs to the BACURD family. Homotetramer; forms a two-fold symmetric tetramer in solution. Interacts with CUL3; interaction is direct and forms a 5:5 heterodecamer. Component of the BCR(BACURD3) E3 ubiquitin ligase complex, at least composed of CUL3, KCTD10/BACURD3 and RBX1. Interacts with DNA polymerase delta subunit 2/POLD2. Interacts with PCNA. Associated with the tectonic-like complex (also named B9 complex); however as Kctd10 has not been identified in all tectonic-like complexes purifications it is unclear whether it is really part of the complex.

Its subcellular location is the nucleus. Its pathway is protein modification; protein ubiquitination. Functionally, substrate-specific adapter of a BCR (BTB-CUL3-RBX1) E3 ubiquitin-protein ligase complex. The BCR(BACURD3) E3 ubiquitin ligase complex mediates the ubiquitination of target proteins, leading to their degradation by the proteasome. This Mus musculus (Mouse) protein is BTB/POZ domain-containing adapter for CUL3-mediated RhoA degradation protein 3 (Kctd10).